A 186-amino-acid polypeptide reads, in one-letter code: MKLIVGLGNPGREYELTRHNIGFMAIDELAKRWNISLNEQKFKGVFGAGFVNGEKVILLKPLTYMNLSGESIRPLMDYYKIDVEDFVVMYDDLDIPVGKLRLRMKGSAGGHNGVKSTISHLGTQEFQRIRMGIDRPKNGMKVVDYVLGRFTSEEIPDVNHSIEKAADACEEWLNKPFLQIMNTFNS.

TRNA is bound at residue Y14. H19 functions as the Proton acceptor in the catalytic mechanism. TRNA contacts are provided by Y64, N66, and N112.

The protein belongs to the PTH family. Monomer.

The protein resides in the cytoplasm. The enzyme catalyses an N-acyl-L-alpha-aminoacyl-tRNA + H2O = an N-acyl-L-amino acid + a tRNA + H(+). Its function is as follows. Hydrolyzes ribosome-free peptidyl-tRNAs (with 1 or more amino acids incorporated), which drop off the ribosome during protein synthesis, or as a result of ribosome stalling. Functionally, catalyzes the release of premature peptidyl moieties from peptidyl-tRNA molecules trapped in stalled 50S ribosomal subunits, and thus maintains levels of free tRNAs and 50S ribosomes. The protein is Peptidyl-tRNA hydrolase of Bacillus cereus (strain ATCC 14579 / DSM 31 / CCUG 7414 / JCM 2152 / NBRC 15305 / NCIMB 9373 / NCTC 2599 / NRRL B-3711).